A 584-amino-acid chain; its full sequence is Pectinesterase 3 (584 aa).

The N-terminal stretch at Met1–Gly50 is a signal peptide. A propeptide spanning residues Val51–Gln266 is cleaved from the precursor. Residues Asn108, Asn129, and Asn226 are each glycosylated (N-linked (GlcNAc...) asparagine). Substrate contacts are provided by Thr348 and Gln378. The active-site Proton donor is the Asp401. A disulfide bridge links Cys415 with Cys435. The active-site Nucleophile is the Asp422. Substrate contacts are provided by Arg490 and Trp492.

The protein in the N-terminal section; belongs to the PMEI family. In the C-terminal section; belongs to the pectinesterase family. In the peel, expression is localized to the region of the flavedo close to the oil glands, and to the innermost layer of the albedo. In the lamella, expression is localized to the cell layers opposing the fruit tissue, and to the parenchyma surrounding the vascular tissue. In the fruit vesicles, expression is restricted to the peripheral cell layers and stalk cells. High levels of expression are detected in the core matrix.

The protein localises to the secreted. It is found in the cell wall. The enzyme catalyses [(1-&gt;4)-alpha-D-galacturonosyl methyl ester](n) + n H2O = [(1-&gt;4)-alpha-D-galacturonosyl](n) + n methanol + n H(+). It functions in the pathway glycan metabolism; pectin degradation; 2-dehydro-3-deoxy-D-gluconate from pectin: step 1/5. Functionally, acts in the modification of cell walls via demethylesterification of cell wall pectin. The sequence is that of Pectinesterase 3 from Citrus sinensis (Sweet orange).